The primary structure comprises 1504 residues: DNA polymerase zeta catalytic subunit (1504 aa).

C1398, C1401, C1414, and C1417 together coordinate Zn(2+). The segment at C1398–C1417 adopts a CysA-type zinc-finger fold. Residues C1446, C1449, C1468, and C1473 each coordinate [4Fe-4S] cluster. The CysB motif motif lies at C1446–C1473.

Belongs to the DNA polymerase type-B family. In terms of assembly, forms DNA polymerase zeta with REV7. Requires [4Fe-4S] cluster as cofactor.

The protein localises to the mitochondrion. Its subcellular location is the nucleus. The enzyme catalyses DNA(n) + a 2'-deoxyribonucleoside 5'-triphosphate = DNA(n+1) + diphosphate. Its function is as follows. Nonessential DNA polymerase. Required for DNA damage induced mutagenesis. Involved in DNA repair, mitochondrial DNA repair and translesion synthesis. Translesion synthesis in S.cerevisiae may use a specialized DNA polymerase that is not required for other DNA replicative processes. Has a role in the bypass of abasic (AP) sites. Highly inefficient in incorporating nucleotides opposite the AP site, but efficiently extends from nucleotides, particularly an A, inserted opposite the lesion. The sequence is that of DNA polymerase zeta catalytic subunit (REV3) from Saccharomyces cerevisiae (strain ATCC 204508 / S288c) (Baker's yeast).